Reading from the N-terminus, the 170-residue chain is ATP synthase subunit b (170 aa).

A helical transmembrane segment spans residues 22-41; the sequence is ILNWAVVVFGLYKFLPGFLG. The segment at 76-98 is disordered; sequence LSSAAEKASQIKADSLKRSESIR. Positions 89–98 are enriched in basic and acidic residues; the sequence is DSLKRSESIR.

It belongs to the ATPase B chain family. As to quaternary structure, F-type ATPases have 2 components, F(1) - the catalytic core - and F(0) - the membrane proton channel. F(1) has five subunits: alpha(3), beta(3), gamma(1), delta(1), epsilon(1). F(0) has four main subunits: a(1), b(1), b'(1) and c(10-14). The alpha and beta chains form an alternating ring which encloses part of the gamma chain. F(1) is attached to F(0) by a central stalk formed by the gamma and epsilon chains, while a peripheral stalk is formed by the delta, b and b' chains.

It is found in the cellular thylakoid membrane. F(1)F(0) ATP synthase produces ATP from ADP in the presence of a proton or sodium gradient. F-type ATPases consist of two structural domains, F(1) containing the extramembraneous catalytic core and F(0) containing the membrane proton channel, linked together by a central stalk and a peripheral stalk. During catalysis, ATP synthesis in the catalytic domain of F(1) is coupled via a rotary mechanism of the central stalk subunits to proton translocation. Functionally, component of the F(0) channel, it forms part of the peripheral stalk, linking F(1) to F(0). The chain is ATP synthase subunit b from Prochlorococcus marinus (strain AS9601).